The chain runs to 748 residues: CCR4-NOT transcription complex subunit 10-B (748 aa).

Residues 1–16 show a composition bias toward basic and acidic residues; sequence MAADKAGEQGAEKHEG. 3 disordered regions span residues 1–25, 483–524, and 605–634; these read MAAD…GISD, KQEN…PPSS, and VSLG…KQIP. Polar residues-rich tracts occupy residues 487–509 and 605–615; these read GSKA…VCSN and VSLGVSSNEQE.

Belongs to the CNOT10 family. Component of the CCR4-NOT complex. cnot10 and cnot11 form a subcomplex docked to the cnot1 scaffold.

Its subcellular location is the cytoplasm. The protein resides in the nucleus. Its function is as follows. Component of the CCR4-NOT complex which is one of the major cellular mRNA deadenylases and is linked to various cellular processes including bulk mRNA degradation, miRNA-mediated repression, translational repression during translational initiation and general transcription regulation. Additional complex functions may be a consequence of its influence on mRNA expression. Is not required for association of CNOT7 to the CCR4-NOT complex. The sequence is that of CCR4-NOT transcription complex subunit 10-B (cnot10-b) from Xenopus laevis (African clawed frog).